The chain runs to 454 residues: L-serine dehydratase TdcG (454 aa).

The protein belongs to the iron-sulfur dependent L-serine dehydratase family. It depends on [4Fe-4S] cluster as a cofactor.

The catalysed reaction is L-serine = pyruvate + NH4(+). The protein operates within amino-acid degradation; L-threonine degradation via propanoate pathway. The sequence is that of L-serine dehydratase TdcG (tdcG) from Escherichia coli (strain K12).